The following is a 255-amino-acid chain: ParA family protein TC_0871 (255 aa).

The protein belongs to the ParA family.

This Chlamydia muridarum (strain MoPn / Nigg) protein is ParA family protein TC_0871.